Reading from the N-terminus, the 125-residue chain is Large ribosomal subunit protein bL12 (125 aa).

The protein belongs to the bacterial ribosomal protein bL12 family. Homodimer. Part of the ribosomal stalk of the 50S ribosomal subunit. Forms a multimeric L10(L12)X complex, where L10 forms an elongated spine to which 2 to 4 L12 dimers bind in a sequential fashion. Binds GTP-bound translation factors.

In terms of biological role, forms part of the ribosomal stalk which helps the ribosome interact with GTP-bound translation factors. Is thus essential for accurate translation. This Rickettsia prowazekii (strain Madrid E) protein is Large ribosomal subunit protein bL12.